A 170-amino-acid polypeptide reads, in one-letter code: Endoribonuclease YbeY (170 aa).

Zn(2+) is bound by residues histidine 118, histidine 122, and histidine 128.

The protein belongs to the endoribonuclease YbeY family. The cofactor is Zn(2+).

It localises to the cytoplasm. Its function is as follows. Single strand-specific metallo-endoribonuclease involved in late-stage 70S ribosome quality control and in maturation of the 3' terminus of the 16S rRNA. The protein is Endoribonuclease YbeY of Mycobacteroides abscessus (strain ATCC 19977 / DSM 44196 / CCUG 20993 / CIP 104536 / JCM 13569 / NCTC 13031 / TMC 1543 / L948) (Mycobacterium abscessus).